The sequence spans 435 residues: MTDENNNDSEFAELKIRGKIFKLPILKASIGEDVIDISRVSAEADCFTYDPGFMSTASCQSTITYIDGDKGILRHRGYDIKDLAEKSDFLEVAYLLIYGELPSGEQYNNFTKQVAHHSLVNERLHYLFQTFCSSSHPMAIMLAAVGSLSAFYPDLLNFKEADYELTAIRMIAKIPTIAAMSYKYSIGQPFIYPDNSLDFTENFLHMMFATPCTKYTVNPIIKNALNKIFILHADHEQNASTSTVRIAGSSGANPFACISTGIASLWGPAHGGANEAVINMLKEIGSSEYIPKYIAKAKDKNDPFRLMGFGHRVYKNYDPRAAVLKETCKEVLKELGQLDNNPLLQIAIELEAIALKDEYFIERKLYPNVDFYSGIIYKAMGIPSQMFTVLFVIARTVGWMAQWKEMHEDPEQKISRPRQLYTGYVHREYKGIRER.

Catalysis depends on residues His-311 and Asp-370.

This sequence belongs to the citrate synthase family. As to quaternary structure, homohexamer.

The catalysed reaction is oxaloacetate + acetyl-CoA + H2O = citrate + CoA + H(+). It functions in the pathway carbohydrate metabolism; tricarboxylic acid cycle; isocitrate from oxaloacetate: step 1/2. In Rickettsia africae (strain ESF-5), this protein is Citrate synthase (gltA).